The chain runs to 94 residues: Co-chaperonin GroES (94 aa).

It belongs to the GroES chaperonin family. Heptamer of 7 subunits arranged in a ring. Interacts with the chaperonin GroEL.

It localises to the cytoplasm. Functionally, together with the chaperonin GroEL, plays an essential role in assisting protein folding. The GroEL-GroES system forms a nano-cage that allows encapsulation of the non-native substrate proteins and provides a physical environment optimized to promote and accelerate protein folding. GroES binds to the apical surface of the GroEL ring, thereby capping the opening of the GroEL channel. The polypeptide is Co-chaperonin GroES (Limosilactobacillus reuteri (strain DSM 20016) (Lactobacillus reuteri)).